We begin with the raw amino-acid sequence, 87 residues long: Small ribosomal subunit protein bS20 (87 aa).

The segment at 1-25 (MANIKSAKKRAVQSEKRRKHNASRR) is disordered.

Belongs to the bacterial ribosomal protein bS20 family.

In terms of biological role, binds directly to 16S ribosomal RNA. This Yersinia pseudotuberculosis serotype O:1b (strain IP 31758) protein is Small ribosomal subunit protein bS20.